The chain runs to 239 residues: Purine nucleoside phosphorylase DeoD-type (239 aa).

Residue H5 participates in a purine D-ribonucleoside binding. Residues G21, R25, R44, and 89–92 (RVGS) contribute to the phosphate site. Residues 180-182 (EME) and 204-205 (SD) contribute to the a purine D-ribonucleoside site. Catalysis depends on D205, which acts as the Proton donor.

It belongs to the PNP/UDP phosphorylase family. Homohexamer; trimer of homodimers.

The enzyme catalyses a purine D-ribonucleoside + phosphate = a purine nucleobase + alpha-D-ribose 1-phosphate. The catalysed reaction is a purine 2'-deoxy-D-ribonucleoside + phosphate = a purine nucleobase + 2-deoxy-alpha-D-ribose 1-phosphate. In terms of biological role, catalyzes the reversible phosphorolytic breakdown of the N-glycosidic bond in the beta-(deoxy)ribonucleoside molecules, with the formation of the corresponding free purine bases and pentose-1-phosphate. The sequence is that of Purine nucleoside phosphorylase DeoD-type from Klebsiella pneumoniae.